Here is a 59-residue protein sequence, read N- to C-terminus: Putative HTH-type transcriptional regulator YneL (59 aa).

An HTH araC/xylS-type domain is found at 1–59 (MSPLRYQKWLRLNEVRRQMLNEHYDVTTAAYAVGYESYPISVGNIRGCLESHPREILPG). The H-T-H motif DNA-binding region spans 26 to 49 (VTTAAYAVGYESYPISVGNIRGCL).

This chain is Putative HTH-type transcriptional regulator YneL (yneL), found in Escherichia coli (strain K12).